A 361-amino-acid polypeptide reads, in one-letter code: UDP-N-acetylglucosamine--N-acetylmuramyl-(pentapeptide) pyrophosphoryl-undecaprenol N-acetylglucosamine transferase (361 aa).

UDP-N-acetyl-alpha-D-glucosamine is bound by residues serine 199 and glutamine 290.

This sequence belongs to the glycosyltransferase 28 family. MurG subfamily.

The protein localises to the cell membrane. The enzyme catalyses Mur2Ac(oyl-L-Ala-gamma-D-Glu-L-Lys-D-Ala-D-Ala)-di-trans,octa-cis-undecaprenyl diphosphate + UDP-N-acetyl-alpha-D-glucosamine = beta-D-GlcNAc-(1-&gt;4)-Mur2Ac(oyl-L-Ala-gamma-D-Glu-L-Lys-D-Ala-D-Ala)-di-trans,octa-cis-undecaprenyl diphosphate + UDP + H(+). It functions in the pathway cell wall biogenesis; peptidoglycan biosynthesis. Functionally, cell wall formation. Catalyzes the transfer of a GlcNAc subunit on undecaprenyl-pyrophosphoryl-MurNAc-pentapeptide (lipid intermediate I) to form undecaprenyl-pyrophosphoryl-MurNAc-(pentapeptide)GlcNAc (lipid intermediate II). The sequence is that of UDP-N-acetylglucosamine--N-acetylmuramyl-(pentapeptide) pyrophosphoryl-undecaprenol N-acetylglucosamine transferase from Streptococcus mutans serotype c (strain ATCC 700610 / UA159).